The primary structure comprises 312 residues: Ornithine carbamoyltransferase (312 aa).

Residues Ser57–Thr60, Gln84, Arg108, and His135–Gln138 contribute to the carbamoyl phosphate site. L-ornithine-binding positions include Asn166, Asp226, and Ser230–Met231. Carbamoyl phosphate-binding positions include Cys265–Leu266 and Arg293.

It belongs to the aspartate/ornithine carbamoyltransferase superfamily. OTCase family.

The protein localises to the cytoplasm. It catalyses the reaction carbamoyl phosphate + L-ornithine = L-citrulline + phosphate + H(+). It functions in the pathway amino-acid biosynthesis; L-arginine biosynthesis; L-arginine from L-ornithine and carbamoyl phosphate: step 1/3. Functionally, reversibly catalyzes the transfer of the carbamoyl group from carbamoyl phosphate (CP) to the N(epsilon) atom of ornithine (ORN) to produce L-citrulline. In Brucella ovis (strain ATCC 25840 / 63/290 / NCTC 10512), this protein is Ornithine carbamoyltransferase.